We begin with the raw amino-acid sequence, 460 residues long: Probable carboxypeptidase TRV_02791 (460 aa).

Residues 1–22 form the signal peptide; it reads MQKTYLWALVSLLASSLVDARS. Residue N98 is glycosylated (N-linked (GlcNAc...) asparagine). Residue D175 participates in Zn(2+) binding. E207 serves as the catalytic Proton acceptor. Zn(2+) is bound at residue E208. N395 is a glycosylation site (N-linked (GlcNAc...) asparagine).

It belongs to the peptidase M20A family. Zn(2+) serves as cofactor.

It is found in the secreted. This is Probable carboxypeptidase TRV_02791 from Trichophyton verrucosum (strain HKI 0517).